We begin with the raw amino-acid sequence, 375 residues long: FAD-dependent catabolic D-arginine dehydrogenase DauA (375 aa).

FAD-binding positions include Ala-14, 32-33, 41-48, Ala-171, and 331-336; these read ER, STGRSAAH, and GGYGIQ.

Belongs to the FAD-dependent glycerol-3-phosphate dehydrogenase family. As to quaternary structure, monomer. FAD is required as a cofactor.

It carries out the reaction D-arginine + A + H2O = 5-guanidino-2-oxopentanoate + AH2 + NH4(+). The enzyme catalyses a D-alpha-amino acid + A + H2O = a 2-oxocarboxylate + AH2 + NH4(+). Inhibited by D-arginine and D-lysine at high concentration. In terms of biological role, dauA is highly expressed within the cystic fibrosis (CF) lung, and it is required for virulence via the optimal production of hydrogen cyanide, pyocyanine, pyoverdine, rhamnolipid and alginate during biofilm formation. Involved in the catabolism of D-lysine and D-arginine. Under aerobic conditions, the arginine succinyltransferase (AST) and arginine transaminase (ATA) pathways are 2 major routes for L-arginine utilization as the sole source of carbon and nitrogen. The D-to-L racemization of arginine by DauA and DauB is necessary, before to be channeled into the AST and/or ATA pathways. DauA catalyzes the flavin-dependent oxidative deamination of D-arginine into 2-ketoarginine (2-KA) and ammonia. It also has dehydrogenase activity towards D-lysine, D-tyrosine, D-methionine, D-phenylalanine, D-ornithine, D-histidine and D-leucine as substrates. The sequence is that of FAD-dependent catabolic D-arginine dehydrogenase DauA from Pseudomonas aeruginosa (strain ATCC 15692 / DSM 22644 / CIP 104116 / JCM 14847 / LMG 12228 / 1C / PRS 101 / PAO1).